Reading from the N-terminus, the 333-residue chain is L-lactate dehydrogenase B chain (333 aa).

NAD(+) is bound by residues 29–57 (GQVG…LEDK) and arginine 99. Substrate is bound by residues arginine 106, asparagine 138, and arginine 169. Asparagine 138 contributes to the NAD(+) binding site. Residue histidine 193 is the Proton acceptor of the active site. Threonine 248 contacts substrate.

This sequence belongs to the LDH/MDH superfamily. LDH family. As to quaternary structure, homotetramer.

The protein resides in the cytoplasm. The enzyme catalyses (S)-lactate + NAD(+) = pyruvate + NADH + H(+). It functions in the pathway fermentation; pyruvate fermentation to lactate; (S)-lactate from pyruvate: step 1/1. Its function is as follows. Interconverts simultaneously and stereospecifically pyruvate and lactate with concomitant interconversion of NADH and NAD(+). This chain is L-lactate dehydrogenase B chain (LDHB), found in Gallus gallus (Chicken).